We begin with the raw amino-acid sequence, 592 residues long: Aspartate--tRNA ligase (592 aa).

Residue Glu-171 coordinates L-aspartate. The tract at residues Gln-195–Lys-198 is aspartate. Arg-217 is an L-aspartate binding site. Residues Arg-217–Glu-219 and Gln-226 contribute to the ATP site. His-448 contributes to the L-aspartate binding site. Glu-482 lines the ATP pocket. Residue Arg-489 coordinates L-aspartate. Gly-534–Arg-537 serves as a coordination point for ATP.

The protein belongs to the class-II aminoacyl-tRNA synthetase family. Type 1 subfamily. In terms of assembly, homodimer.

The protein localises to the cytoplasm. It carries out the reaction tRNA(Asp) + L-aspartate + ATP = L-aspartyl-tRNA(Asp) + AMP + diphosphate. Catalyzes the attachment of L-aspartate to tRNA(Asp) in a two-step reaction: L-aspartate is first activated by ATP to form Asp-AMP and then transferred to the acceptor end of tRNA(Asp). The protein is Aspartate--tRNA ligase of Vibrio atlanticus (strain LGP32) (Vibrio splendidus (strain Mel32)).